Consider the following 182-residue polypeptide: CDP-diacylglycerol--glycerol-3-phosphate 3-phosphatidyltransferase (182 aa).

Topologically, residues 2–12 (QFNIPTLLTLF) are cytoplasmic. Residues 13-37 (RVILIPFFVVVFYLPFAWAPMVSAL) form a helical membrane-spanning segment. The Periplasmic portion of the chain corresponds to 38–60 (IFCIAAITDWFDGFLARRWNQST). Residues 61–81 (RFGAFLDPVADKVLVAIAMVL) form a helical membrane-spanning segment. Residues 82 to 86 (VTEHY) are Cytoplasmic-facing. Residues 87-107 (HSWWVTLPAATMIAREIIISA) form a helical membrane-spanning segment. Residues 108-145 (LREWMAELGKRSSVAVSWIGKVKTTAQMVALAWLLWRP) lie on the Periplasmic side of the membrane. Residues 146–168 (NIWVEYAGIALFFVAAVLTLWSM) traverse the membrane as a helical segment. The Cytoplasmic segment spans residues 169-181 (LQYLSAARGDLLD).

The protein belongs to the CDP-alcohol phosphatidyltransferase class-I family.

It is found in the cell inner membrane. The catalysed reaction is a CDP-1,2-diacyl-sn-glycerol + sn-glycerol 3-phosphate = a 1,2-diacyl-sn-glycero-3-phospho-(1'-sn-glycero-3'-phosphate) + CMP + H(+). It participates in phospholipid metabolism; phosphatidylglycerol biosynthesis; phosphatidylglycerol from CDP-diacylglycerol: step 1/2. Functionally, catalyzes the conversion of cytidine diphosphate diacylglycerol (CDP-DG) and glycerol 3-phosphate into phosphatidylglycerol. Essential for the synthesis of anionic phospholipids, thereby playing a role in balancing the ratio of zwitterionic and anionic phospholipids, which is thought to be important for normal membrane function. This is CDP-diacylglycerol--glycerol-3-phosphate 3-phosphatidyltransferase from Salmonella paratyphi A (strain ATCC 9150 / SARB42).